Reading from the N-terminus, the 542-residue chain is CTP synthase (542 aa).

The amidoligase domain stretch occupies residues 1-265 (MARYVFITGG…DDEVLAAFGI (265 aa)). A CTP-binding site is contributed by S13. S13 provides a ligand contact to UTP. ATP is bound by residues 14–19 (SLGKGI) and D71. The Mg(2+) site is built by D71 and E139. Residues 146 to 148 (DIE), 186 to 191 (KTKPTQ), and K222 contribute to the CTP site. Residues 186 to 191 (KTKPTQ) and K222 each bind UTP. Residues 291–541 (TIAIVGKYTG…IEAATEQSRL (251 aa)) enclose the Glutamine amidotransferase type-1 domain. G353 contributes to the L-glutamine binding site. C380 (nucleophile; for glutamine hydrolysis) is an active-site residue. Residues 381 to 384 (FGMQ), E404, and R469 contribute to the L-glutamine site. Catalysis depends on residues H514 and E516.

This sequence belongs to the CTP synthase family. Homotetramer.

The enzyme catalyses UTP + L-glutamine + ATP + H2O = CTP + L-glutamate + ADP + phosphate + 2 H(+). It catalyses the reaction L-glutamine + H2O = L-glutamate + NH4(+). The catalysed reaction is UTP + NH4(+) + ATP = CTP + ADP + phosphate + 2 H(+). It participates in pyrimidine metabolism; CTP biosynthesis via de novo pathway; CTP from UDP: step 2/2. Its activity is regulated as follows. Allosterically activated by GTP, when glutamine is the substrate; GTP has no effect on the reaction when ammonia is the substrate. The allosteric effector GTP functions by stabilizing the protein conformation that binds the tetrahedral intermediate(s) formed during glutamine hydrolysis. Inhibited by the product CTP, via allosteric rather than competitive inhibition. In terms of biological role, catalyzes the ATP-dependent amination of UTP to CTP with either L-glutamine or ammonia as the source of nitrogen. Regulates intracellular CTP levels through interactions with the four ribonucleotide triphosphates. In Rhizobium etli (strain ATCC 51251 / DSM 11541 / JCM 21823 / NBRC 15573 / CFN 42), this protein is CTP synthase.